A 193-amino-acid polypeptide reads, in one-letter code: Fe/S biogenesis protein NfuA (193 aa).

Cys149 and Cys152 together coordinate [4Fe-4S] cluster.

It belongs to the NfuA family. As to quaternary structure, homodimer. The cofactor is [4Fe-4S] cluster.

Involved in iron-sulfur cluster biogenesis. Binds a 4Fe-4S cluster, can transfer this cluster to apoproteins, and thereby intervenes in the maturation of Fe/S proteins. Could also act as a scaffold/chaperone for damaged Fe/S proteins. The protein is Fe/S biogenesis protein NfuA of Psychromonas ingrahamii (strain DSM 17664 / CCUG 51855 / 37).